Consider the following 122-residue polypeptide: Large ribosomal subunit protein uL14 (122 aa).

The protein belongs to the universal ribosomal protein uL14 family. In terms of assembly, part of the 50S ribosomal subunit. Forms a cluster with proteins L3 and L19. In the 70S ribosome, L14 and L19 interact and together make contacts with the 16S rRNA in bridges B5 and B8.

Binds to 23S rRNA. Forms part of two intersubunit bridges in the 70S ribosome. The protein is Large ribosomal subunit protein uL14 of Malacoplasma penetrans (strain HF-2) (Mycoplasma penetrans).